Reading from the N-terminus, the 465-residue chain is MKMPQTIGVVHFVGIGGIGMSGIAEVLHTLGYHVQGSDQAENANVVRLREKGIKAFIGHAAENLGDAEVVVISSAIKRDNPEYVAARERHLPIVRRAEMLAELMRFRQAVAIGGTHGKTTTTSMVAALLDAGGLDPTVINGGIINVYGTNARMGEGDWMVVEADESDGTFLKLPADIAVITNIDPEHLDHYGSFDKVREAFRQFVENVPFYGLGVMCIDHPEVQALVSRIEDRRVVTYGENLQADVRFENHRMENGHSVFDVIIRARKSDAVKAMRDLRLPMPGRHNVSNATAAIAVANELGMGEEAIRKGLAAFGGVKRRFTLTGTWNGISIFDDYGHHPVEIRAVLKAAREATSGRIIAIAQPHRYTRLRDLFDEFSACFNDADTVLVAPVYAAGESPIAGISSEALVASLRAAGHRDARFIPGPEAIAPIVREAANEGDFVVFLGAGNITQWAYALPKELCS.

An ATP-binding site is contributed by 114-120 (GTHGKTT).

It belongs to the MurCDEF family.

Its subcellular location is the cytoplasm. It catalyses the reaction UDP-N-acetyl-alpha-D-muramate + L-alanine + ATP = UDP-N-acetyl-alpha-D-muramoyl-L-alanine + ADP + phosphate + H(+). It functions in the pathway cell wall biogenesis; peptidoglycan biosynthesis. Functionally, cell wall formation. The chain is UDP-N-acetylmuramate--L-alanine ligase from Chelativorans sp. (strain BNC1).